The chain runs to 226 residues: Uracil-DNA glycosylase (226 aa).

Catalysis depends on Asp-64, which acts as the Proton acceptor.

This sequence belongs to the uracil-DNA glycosylase (UDG) superfamily. UNG family.

It localises to the cytoplasm. It catalyses the reaction Hydrolyzes single-stranded DNA or mismatched double-stranded DNA and polynucleotides, releasing free uracil.. In terms of biological role, excises uracil residues from the DNA which can arise as a result of misincorporation of dUMP residues by DNA polymerase or due to deamination of cytosine. In Vibrio parahaemolyticus serotype O3:K6 (strain RIMD 2210633), this protein is Uracil-DNA glycosylase.